Consider the following 291-residue polypeptide: uncharacterized protein (291 aa).

2 helical membrane passes run 42–62 (IFFFLILILVFVLWILVRALW) and 86–106 (TIFPCFISIFIVEPSFALALD).

It belongs to the cytochrome c oxidase subunit 2 family.

The protein localises to the mitochondrion membrane. This is an uncharacterized protein from Arabidopsis thaliana (Mouse-ear cress).